The primary structure comprises 172 residues: CD-NTase-associated protein 7 (172 aa).

The segment at 141-172 (AQSPGINGYLENDKTYSAGGRSLTRTSVRNFV) is required for binding to CdnC and to confer phage immunity.

It belongs to the bacterial HORMA family. HORMA1 subfamily. In terms of assembly, forms complexes with CdnC with 1:1 and 2:2 stoichimetry, and a 1:1:6 CdnC:Cap7:Cap6 complex.

Its function is as follows. Sensor protein of a CBASS antivirus system. CBASS (cyclic oligonucleotide-based antiphage signaling system) provides immunity against bacteriophage. The CD-NTase protein synthesizes cyclic nucleotides in response to infection; these serve as specific second messenger signals. The signals activate a diverse range of effectors, leading to bacterial cell death and thus abortive phage infection. A type III-C(AAA) CBASS system. Binds to a closure peptide (consensus His-Xaa-Xaa-Ile-Leu-Leu-Thr), which allows it to activate CdnC for second messenger synthesis. Functionally, protects E.coli strain JP313 against bacteriophage lambda cI- infection. When the cdnC-cap7-cap6-nucC operon is transformed into a susceptible strain it confers bacteriophage immunity. Mutations in the sensor (Cap7 also called HORMA) or effector proteins (CdnC, NucC) but not the disassembly protein (Cap6 also called Trip13) no longer confer immunity. The presence of the intact operon leads to culture collapse and cell death, which occurs before the phage has finished its replication cycle, thus protecting non-infected bacteria by aborting the phage infection and preventing its propagation. This is CD-NTase-associated protein 7 from Escherichia coli (strain MS 115-1).